A 652-amino-acid polypeptide reads, in one-letter code: DNA ligase (652 aa).

NAD(+) contacts are provided by residues 29–33, 78–79, and E107; these read DSEYD and SL. The active-site N6-AMP-lysine intermediate is the K109. 4 residues coordinate NAD(+): R130, E164, K278, and K302. Zn(2+) is bound by residues C395, C398, C413, and C418. In terms of domain architecture, BRCT spans 577–652; that stretch reads AADAALSGMT…IRDEDWLDSL (76 aa).

The protein belongs to the NAD-dependent DNA ligase family. LigA subfamily. Mg(2+) is required as a cofactor. Requires Mn(2+) as cofactor.

The catalysed reaction is NAD(+) + (deoxyribonucleotide)n-3'-hydroxyl + 5'-phospho-(deoxyribonucleotide)m = (deoxyribonucleotide)n+m + AMP + beta-nicotinamide D-nucleotide.. Functionally, DNA ligase that catalyzes the formation of phosphodiester linkages between 5'-phosphoryl and 3'-hydroxyl groups in double-stranded DNA using NAD as a coenzyme and as the energy source for the reaction. It is essential for DNA replication and repair of damaged DNA. In Streptococcus sanguinis (strain SK36), this protein is DNA ligase.